Consider the following 1155-residue polypeptide: DNA-directed RNA polymerase subunit beta (1155 aa).

Belongs to the RNA polymerase beta chain family. As to quaternary structure, the RNAP catalytic core consists of 2 alpha, 1 beta, 1 beta' and 1 omega subunit. When a sigma factor is associated with the core the holoenzyme is formed, which can initiate transcription.

The catalysed reaction is RNA(n) + a ribonucleoside 5'-triphosphate = RNA(n+1) + diphosphate. In terms of biological role, DNA-dependent RNA polymerase catalyzes the transcription of DNA into RNA using the four ribonucleoside triphosphates as substrates. This is DNA-directed RNA polymerase subunit beta from Borrelia turicatae (strain 91E135).